Consider the following 342-residue polypeptide: Tetraacyldisaccharide 4'-kinase (342 aa).

68 to 75 (TVGGTGKT) lines the ATP pocket.

This sequence belongs to the LpxK family.

It catalyses the reaction a lipid A disaccharide + ATP = a lipid IVA + ADP + H(+). The protein operates within glycolipid biosynthesis; lipid IV(A) biosynthesis; lipid IV(A) from (3R)-3-hydroxytetradecanoyl-[acyl-carrier-protein] and UDP-N-acetyl-alpha-D-glucosamine: step 6/6. In terms of biological role, transfers the gamma-phosphate of ATP to the 4'-position of a tetraacyldisaccharide 1-phosphate intermediate (termed DS-1-P) to form tetraacyldisaccharide 1,4'-bis-phosphate (lipid IVA). The chain is Tetraacyldisaccharide 4'-kinase from Burkholderia vietnamiensis (strain G4 / LMG 22486) (Burkholderia cepacia (strain R1808)).